Consider the following 114-residue polypeptide: Large ribosomal subunit protein uL22c (114 aa).

It belongs to the universal ribosomal protein uL22 family. As to quaternary structure, part of the 50S ribosomal subunit.

It localises to the plastid. The protein localises to the chloroplast. Functionally, this protein binds specifically to 23S rRNA. In terms of biological role, the globular domain of the protein is located near the polypeptide exit tunnel on the outside of the subunit, while an extended beta-hairpin is found that lines the wall of the exit tunnel in the center of the 70S ribosome. This is Large ribosomal subunit protein uL22c (rpl22) from Gracilaria tenuistipitata (Red alga).